The chain runs to 1025 residues: Transcription factor tau 131 kDa subunit (1025 aa).

The span at 1 to 26 (MAAGKLKKEQQNQSAERESADTGKVN) shows a compositional bias: basic and acidic residues. The disordered stretch occupies residues 1–71 (MAAGKLKKEQ…EDEYNSERDS (71 aa)). The span at 46–65 (DEEYDDEDVPHDLQLSEDEY) shows a compositional bias: acidic residues. TPR repeat units follow at residues 128 to 161 (VAQLLSQANEAFVRNDLQVAERLFNEVIKKDARN), 162 to 195 (FAAYETLGDIYQLQGRLNDCCNSWFLAAHLNASD), 196 to 229 (WEFWKIVAILSADLDHVRQAIYCFSRVISLNPME), 230 to 263 (WESIYRRSMLYKKTGQLARALDGFQRLYMYNPYD), and 264 to 297 (ANILRELAILYVDYDRIEDSIELYMKVFNANVER). Positions 128–569 (VAQLLSQANE…VDVVEMRKHQ (442 aa)) are sufficient to bind BDP1. Positions 309-334 (LDSSDEESAAEGEDADEKEPLEQDED) are disordered. Position 311 is a phosphoserine (Ser311). The span at 311–325 (SSDEESAAEGEDADE) shows a compositional bias: acidic residues. TPR repeat units lie at residues 432–465 (IDIRVRLGLLRLNTDNLVEALNHFQCLYDETFSD), 467–501 (ADLYFEAATALTRAEKYKEAIDFFTPLLSLEEWRT), 502–535 (TDVFKPLARCYKEIESYETAKEFYELAIKSEPDD), 536–569 (LDIRVSLAEVYYRLNDPETFKHMLVDVVEMRKHQ), 875–908 (PYLYYIYAVLLYSSRGFLSALQYLTRLEEDIPDD), and 959–992 (QEADYNLGRAFHLIGLVSIAIEYYNRVLENYDDG).

As to quaternary structure, component of the TFIIIC complex composed of TFC1, TFC3, TFC4, TFC6, TFC7 and TFC8. The subunits are organized in two globular domains, tauA and tauB, connected by a proteolysis-sensitive and flexible linker. Interacts with TFC1, TFC3, TFC6, TFIIIB subunits BRF1 and BDP1, and with RNA polymerase III subunit RPC10. Post-translationally, phosphorylated.

The protein localises to the nucleus. In terms of biological role, TFIIIC mediates tRNA and 5S RNA gene activation by binding to intragenic promoter elements. Upstream of the transcription start site, TFIIIC assembles the initiation complex TFIIIB-TFIIIC-tDNA, which is sufficient for RNA polymerase III recruitment and function. Part of the tauA domain of TFIIIC that binds boxA DNA promoter sites of tRNA and similar genes. TFC4 is the TFIIIB-assembling subunit of TFIIIC and essential for viability. This is Transcription factor tau 131 kDa subunit (TFC4) from Saccharomyces cerevisiae (strain ATCC 204508 / S288c) (Baker's yeast).